Here is a 638-residue protein sequence, read N- to C-terminus: Dihydrolipoyllysine-residue acetyltransferase component of pyruvate dehydrogenase complex (638 aa).

2 Lipoyl-binding domains span residues 2–74 (SEII…IELE) and 117–191 (SQEV…LTLR). At K40 the chain carries N6-lipoyllysine. Low complexity predominate over residues 90–117 (PAAPTQAVDEAEAPSPGASATPAPAAAS). Residues 90–119 (PAAPTQAVDEAEAPSPGASATPAPAAASQE) are disordered. Position 157 is an N6-lipoyllysine (K157). Residues 201–220 (APAAAAAASPAPAPLAPAAA) are disordered. A Lipoyl-binding 3 domain is found at 222–296 (PQEVKVPDIG…GTGDQILTLR (75 aa)). Residue K262 is modified to N6-lipoyllysine. A compositionally biased stretch (low complexity) spans 301–320 (APSGPRARGSPGQAAAAPGA). Residues 301 to 336 (APSGPRARGSPGQAAAAPGAAPAPAPVGAPSRNGAK) form a disordered region. Positions 338 to 375 (HAGPAVRQLAREFGVELAAINSTGPRGRILKEDVQAYV) constitute a Peripheral subunit-binding (PSBD) domain. The interval 382–638 (AKEAPAAGAA…LLADIRAILL (257 aa)) is catalytic. Residue H611 is part of the active site.

The protein belongs to the 2-oxoacid dehydrogenase family. As to quaternary structure, forms a 24-polypeptide structural core with octahedral symmetry. Requires (R)-lipoate as cofactor.

It carries out the reaction N(6)-[(R)-dihydrolipoyl]-L-lysyl-[protein] + acetyl-CoA = N(6)-[(R)-S(8)-acetyldihydrolipoyl]-L-lysyl-[protein] + CoA. Its function is as follows. The pyruvate dehydrogenase complex catalyzes the overall conversion of pyruvate to acetyl-CoA and CO(2). It contains multiple copies of three enzymatic components: pyruvate dehydrogenase (E1), dihydrolipoamide acetyltransferase (E2) and lipoamide dehydrogenase (E3). In Azotobacter vinelandii, this protein is Dihydrolipoyllysine-residue acetyltransferase component of pyruvate dehydrogenase complex.